A 131-amino-acid chain; its full sequence is Beta/delta-urticatoxin-Dm2a (131 aa).

An N-terminal signal peptide occupies residues methionine 1–alanine 24. Positions serine 25–glutamate 69 are excised as a propeptide. Intrachain disulfides connect cysteine 72–cysteine 88, cysteine 79–cysteine 93, cysteine 87–cysteine 101, cysteine 103–cysteine 117, cysteine 110–cysteine 122, and cysteine 116–cysteine 130.

The protein belongs to the urticatoxin-2 family. In terms of tissue distribution, expressed in trichomes, that are stiff epidermal hairs located on the surface of petioles and leaves.

The protein resides in the secreted. In terms of biological role, plant defense neurotoxin that causes pain and systemic symptoms in mammals via modulation of voltage-gated sodium channels (Nav). Potent modulator of human Nav1.5/SCN5A (EC(50)=55 nM), Nav1.6/SCN8A (EC(50)=0.86 nM), and Nav1.7/SCN9A (EC(50)=208 nM), where it shifts the activation threshold to more negative potentials and delays fast inactivation. Also shifts the voltage-dependence of steady-state fast inactivation of Nav1.6/SCN8A, but not that of Nav1.5/SCN5A or Nav1.7/SCN9A. On Nav1.7/SCN9A, principally acts by binding to extracellular loops of domain IV (Nav site 3). In vivo, intraplantar injection into mice causes numerous dose-dependent, immediate, and long-lasting spontaneous pain behaviors, while no swelling is observed in the injected paw. At the highest doses tested, systemic symptoms including hypokinesia and hypersalivation are observed. The protein is Beta/delta-urticatoxin-Dm2a of Dendrocnide moroides (Gympie stinging tree).